The sequence spans 371 residues: Aminomethyltransferase (371 aa).

It belongs to the GcvT family. The glycine cleavage system is composed of four proteins: P, T, L and H.

The enzyme catalyses N(6)-[(R)-S(8)-aminomethyldihydrolipoyl]-L-lysyl-[protein] + (6S)-5,6,7,8-tetrahydrofolate = N(6)-[(R)-dihydrolipoyl]-L-lysyl-[protein] + (6R)-5,10-methylene-5,6,7,8-tetrahydrofolate + NH4(+). Functionally, the glycine cleavage system catalyzes the degradation of glycine. In Nitrosococcus oceani (strain ATCC 19707 / BCRC 17464 / JCM 30415 / NCIMB 11848 / C-107), this protein is Aminomethyltransferase.